Here is a 252-residue protein sequence, read N- to C-terminus: tRNA (guanine-N(1)-)-methyltransferase (252 aa).

Residues Gly-118 and 138–143 (IGDYVL) contribute to the S-adenosyl-L-methionine site.

It belongs to the RNA methyltransferase TrmD family. As to quaternary structure, homodimer.

Its subcellular location is the cytoplasm. The enzyme catalyses guanosine(37) in tRNA + S-adenosyl-L-methionine = N(1)-methylguanosine(37) in tRNA + S-adenosyl-L-homocysteine + H(+). Specifically methylates guanosine-37 in various tRNAs. The chain is tRNA (guanine-N(1)-)-methyltransferase from Pseudomonas paraeruginosa (strain DSM 24068 / PA7) (Pseudomonas aeruginosa (strain PA7)).